We begin with the raw amino-acid sequence, 600 residues long: NADH-quinone oxidoreductase subunit C/D (600 aa).

Residues 1–190 form an NADH dehydrogenase I subunit C region; sequence MVNNMTDLTA…SPFELTKAKQ (190 aa). The NADH dehydrogenase I subunit D stretch occupies residues 214–600; that stretch reads DFMFLNLGPN…IDFVMSDVDR (387 aa).

In the N-terminal section; belongs to the complex I 30 kDa subunit family. This sequence in the C-terminal section; belongs to the complex I 49 kDa subunit family. As to quaternary structure, NDH-1 is composed of 13 different subunits. Subunits NuoB, CD, E, F, and G constitute the peripheral sector of the complex.

It is found in the cell inner membrane. It carries out the reaction a quinone + NADH + 5 H(+)(in) = a quinol + NAD(+) + 4 H(+)(out). Its function is as follows. NDH-1 shuttles electrons from NADH, via FMN and iron-sulfur (Fe-S) centers, to quinones in the respiratory chain. The immediate electron acceptor for the enzyme in this species is believed to be ubiquinone. Couples the redox reaction to proton translocation (for every two electrons transferred, four hydrogen ions are translocated across the cytoplasmic membrane), and thus conserves the redox energy in a proton gradient. This Escherichia coli O127:H6 (strain E2348/69 / EPEC) protein is NADH-quinone oxidoreductase subunit C/D.